A 198-amino-acid polypeptide reads, in one-letter code: Pre-histone-like nucleoprotein (198 aa).

The residue at position 2 (serine 2) is an N-acetylserine; by host. A propeptide spanning residues 2-24 (SILISPSNNTGWGLRFPSKMFGG) is cleaved from the precursor. The interval 24-55 (GAKKRSDQHPVRVRGHYRAPWGAHKRGRTGRT) is disordered. Residues lysine 27 and lysine 48 each carry the N6-acetyllysine; by host modification. Basic residues predominate over residues 34-52 (VRVRGHYRAPWGAHKRGRT). Phosphothreonine; by host occurs at positions 55 and 74. Serine 183 and serine 185 each carry phosphoserine; by host. The Nuclear localization signal signature appears at 188-198 (RVPVRTRPPRN).

Belongs to the adenoviridae histone-like nucleoprotein family. Interacts with the core-capsid bridging protein; this interaction bridges the virus core to the capsid. Interacts with host NPM1; this interaction might play a role in placing the pre-histone-like nucleoprotein on the viral DNA or regulating viral gene expression. Interacts with host HMGB1; this interaction inhibits host immune response. In terms of processing, cleaved near the N-terminus by the viral protease during virion maturation to form the mature protein.

The protein resides in the virion. It localises to the host nucleus. It is found in the host nucleolus. Its function is as follows. Plays a role in the inhibition of host immune response within the nucleus. Interacts with cellular nucleosomes and immobilizes the host immune danger signal HMGB1 on chromatin. In turn, prevents HMGB1 release out of the cell and thus decreases inflammation. Also plays a role in the wrapping and condensation of the viral DNA. May also promote viral genome import into the nucleus. The chain is Pre-histone-like nucleoprotein from Human adenovirus C serotype 2 (HAdV-2).